The chain runs to 200 residues: Nucleoside triphosphate pyrophosphatase (200 aa).

Asp79 acts as the Proton acceptor in catalysis.

Belongs to the Maf family. A divalent metal cation serves as cofactor.

It is found in the cytoplasm. The enzyme catalyses a ribonucleoside 5'-triphosphate + H2O = a ribonucleoside 5'-phosphate + diphosphate + H(+). It catalyses the reaction a 2'-deoxyribonucleoside 5'-triphosphate + H2O = a 2'-deoxyribonucleoside 5'-phosphate + diphosphate + H(+). Nucleoside triphosphate pyrophosphatase. May have a dual role in cell division arrest and in preventing the incorporation of modified nucleotides into cellular nucleic acids. This chain is Nucleoside triphosphate pyrophosphatase, found in Legionella pneumophila (strain Corby).